We begin with the raw amino-acid sequence, 227 residues long: uncharacterized protein (227 aa).

2 helical membrane-spanning segments follow: residues 7–24 (FVYA…VTWA) and 135–157 (VVVI…LMCL).

The protein belongs to the TMEM9 family.

The protein resides in the membrane. This is an uncharacterized protein from Drosophila melanogaster (Fruit fly).